The chain runs to 65 residues: Large ribosomal subunit protein bL35 (65 aa).

The interval methionine 1–threonine 46 is disordered. Over residues lysine 21–leucine 44 the composition is skewed to basic residues.

The protein belongs to the bacterial ribosomal protein bL35 family.

This is Large ribosomal subunit protein bL35 from Gloeobacter violaceus (strain ATCC 29082 / PCC 7421).